The chain runs to 431 residues: Trigger factor (431 aa).

Residues 165–250 (GDTVVIDFDG…IHELKRKELP (86 aa)) enclose the PPIase FKBP-type domain.

This sequence belongs to the FKBP-type PPIase family. Tig subfamily.

It is found in the cytoplasm. The enzyme catalyses [protein]-peptidylproline (omega=180) = [protein]-peptidylproline (omega=0). In terms of biological role, involved in protein export. Acts as a chaperone by maintaining the newly synthesized protein in an open conformation. Functions as a peptidyl-prolyl cis-trans isomerase. The sequence is that of Trigger factor from Leuconostoc mesenteroides subsp. mesenteroides (strain ATCC 8293 / DSM 20343 / BCRC 11652 / CCM 1803 / JCM 6124 / NCDO 523 / NBRC 100496 / NCIMB 8023 / NCTC 12954 / NRRL B-1118 / 37Y).